A 118-amino-acid chain; its full sequence is Protein Rev (118 aa).

Serine 5 and serine 8 each carry phosphoserine; by host CK2. The segment at 18–26 is homomultimerization; sequence LIKFLYQSN. The interval 23–46 is disordered; sequence YQSNPPPSPEGTRQARRNRRRRWR. The Nuclear localization signal and RNA-binding (RRE) motif lies at 34-50; the sequence is TRQARRNRRRRWRARQR. The segment covering 36–46 has biased composition (basic residues); the sequence is QARRNRRRRWR. Residues 73–84 carry the Nuclear export signal and binding to XPO1 motif; that stretch reads LQLPPLERLNLN. The interval 87-118 is disordered; the sequence is EDCRTSGTQGVGHPQISVESPTVLESGTEEQC. Serine 92 carries the post-translational modification Phosphoserine; by host. Residues 103 to 112 are compositionally biased toward polar residues; sequence SVESPTVLES.

It belongs to the HIV-1 REV protein family. As to quaternary structure, homomultimer; when bound to the RRE. Multimeric assembly is essential for activity and may involve XPO1. Binds to human KPNB1, XPO1, TNPO1, RANBP5 and IPO7. Interacts with the viral Integrase. Interacts with human KHDRBS1. Interacts with human NAP1; this interaction decreases Rev multimerization and stimulates its activity. Interacts with human DEAD-box helicases DDX3 and DDX24; these interactions may serve for viral RNA export to the cytoplasm and packaging, respectively. Interacts with human PSIP1; this interaction may inhibit HIV-1 DNA integration by promoting dissociation of the Integrase-LEDGF/p75 complex. Post-translationally, asymmetrically arginine dimethylated at one site by host PRMT6. Methylation impairs the RNA-binding activity and export of viral RNA from the nucleus to the cytoplasm. Phosphorylated by protein kinase CK2. Presence of, and maybe binding to the N-terminus of the regulatory beta subunit of CK2 is necessary for CK2-mediated Rev's phosphorylation.

The protein localises to the host nucleus. It localises to the host nucleolus. The protein resides in the host cytoplasm. Functionally, escorts unspliced or incompletely spliced viral pre-mRNAs (late transcripts) out of the nucleus of infected cells. These pre-mRNAs carry a recognition sequence called Rev responsive element (RRE) located in the env gene, that is not present in fully spliced viral mRNAs (early transcripts). This function is essential since most viral proteins are translated from unspliced or partially spliced pre-mRNAs which cannot exit the nucleus by the pathway used by fully processed cellular mRNAs. Rev itself is translated from a fully spliced mRNA that readily exits the nucleus. Rev's nuclear localization signal (NLS) binds directly to KPNB1/Importin beta-1 without previous binding to KPNA1/Importin alpha-1. KPNB1 binds to the GDP bound form of RAN (Ran-GDP) and targets Rev to the nucleus. In the nucleus, the conversion from Ran-GDP to Ran-GTP dissociates Rev from KPNB1 and allows Rev's binding to the RRE in viral pre-mRNAs. Rev multimerization on the RRE via cooperative assembly exposes its nuclear export signal (NES) to the surface. Rev can then form a complex with XPO1/CRM1 and Ran-GTP, leading to nuclear export of the complex. Conversion from Ran-GTP to Ran-GDP mediates dissociation of the Rev/RRE/XPO1/RAN complex, so that Rev can return to the nucleus for a subsequent round of export. Beside KPNB1, also seems to interact with TNPO1/Transportin-1, RANBP5/IPO5 and IPO7/RANBP7 for nuclear import. The nucleoporin-like HRB/RIP is an essential cofactor that probably indirectly interacts with Rev to release HIV RNAs from the perinuclear region to the cytoplasm. This Human immunodeficiency virus type 1 group M subtype D (isolate ELI) (HIV-1) protein is Protein Rev.